We begin with the raw amino-acid sequence, 253 residues long: 7-carboxy-7-deazaguanine synthase (253 aa).

Residues 12 to 14 (WQG) and Arg-32 contribute to the substrate site. A Radical SAM core domain is found at 23–253 (AFGRRQIFVR…FQVHKYLNVL (231 aa)). Cys-36, Cys-40, and Cys-43 together coordinate [4Fe-4S] cluster. Ser-45 is a binding site for Mg(2+). Thr-98 provides a ligand contact to substrate. Gly-100 serves as a coordination point for S-adenosyl-L-methionine.

Belongs to the radical SAM superfamily. 7-carboxy-7-deazaguanine synthase family. In terms of assembly, homodimer. [4Fe-4S] cluster is required as a cofactor. The cofactor is S-adenosyl-L-methionine. Requires Mg(2+) as cofactor.

The catalysed reaction is 6-carboxy-5,6,7,8-tetrahydropterin + H(+) = 7-carboxy-7-deazaguanine + NH4(+). The protein operates within purine metabolism; 7-cyano-7-deazaguanine biosynthesis. In terms of biological role, catalyzes the complex heterocyclic radical-mediated conversion of 6-carboxy-5,6,7,8-tetrahydropterin (CPH4) to 7-carboxy-7-deazaguanine (CDG), a step common to the biosynthetic pathways of all 7-deazapurine-containing compounds. This is 7-carboxy-7-deazaguanine synthase from Thermococcus kodakarensis (strain ATCC BAA-918 / JCM 12380 / KOD1) (Pyrococcus kodakaraensis (strain KOD1)).